The primary structure comprises 199 residues: MAMWVFGYGSLIWKTGFPFDESLPGFIKGYRRVFHQGSTDHRGTPDFPGRTVTLEAAHEEVCCGVAYKITKEEDKRDALLHLEVREKQYDQKEYLDFFTDSNASEPAVAGVMVYIASPDKKSNNNYLGPAPLEDIAKQIVKAKGPSGPNRDYLFNLEEALAQLGFKDKHVTDLANQVRHILSESEELDIDATAATANNV.

5-10 (VFGYGS) provides a ligand contact to substrate. The active-site Proton acceptor is glutamate 86.

This sequence belongs to the gamma-glutamylcyclotransferase family. Mn(2+) is required as a cofactor.

Its subcellular location is the cytoplasm. The catalysed reaction is glutathione = L-cysteinylglycine + 5-oxo-L-proline. Its function is as follows. Converts GSH to 5-oxoproline and cysteine-glycine (Cys-Gly) dipeptide in vitro and plays a significant role in glutathione (GSH) homeostasis. Has no activity towards gamma-glutamyl-L-cysteine but possesses very low activity towards gamma-glutamyl-L-alanine. This is Gamma-glutamylcyclotransferase 2-3 from Arabidopsis thaliana (Mouse-ear cress).